Reading from the N-terminus, the 332-residue chain is Cytoplasmic phosphatidylinositol transfer protein 1 (332 aa).

A phosphoserine mark is found at Ser119, Ser270, and Ser274. The span at 267-285 (SVRSAPSSAPSTPLSTDAP) shows a compositional bias: low complexity. Residues 267–332 (SVRSAPSSAP…SDKPCRPKSE (66 aa)) are disordered. A Phosphothreonine modification is found at Thr278. Basic and acidic residues predominate over residues 322–332 (SSDKPCRPKSE).

It belongs to the PtdIns transfer protein family. PI transfer class IIB subfamily. Ubiquitously expressed.

It is found in the cytoplasm. The enzyme catalyses a 1,2-diacyl-sn-glycero-3-phospho-(1D-myo-inositol)(in) = a 1,2-diacyl-sn-glycero-3-phospho-(1D-myo-inositol)(out). It catalyses the reaction a 1,2-diacyl-sn-glycero-3-phosphate(in) = a 1,2-diacyl-sn-glycero-3-phosphate(out). Catalyzes the transfer of phosphatidylinositol (PI) and phosphatidic acid (PA) between membranes. Binds PA derived from the phospholipase D signaling pathway and among the cellular PA species, preferably binds to the C16:0/16:1 and C16:1/18:1 PA species. Functionally, catalyzes the transfer of phosphatidylinositol between membranes. This is Cytoplasmic phosphatidylinositol transfer protein 1 (PITPNC1) from Homo sapiens (Human).